The chain runs to 174 residues: Crossover junction endodeoxyribonuclease RuvC (174 aa).

Residues Asp-8, Glu-69, and Asp-141 contribute to the active site. Positions 8, 69, and 141 each coordinate Mg(2+).

Belongs to the RuvC family. Homodimer which binds Holliday junction (HJ) DNA. The HJ becomes 2-fold symmetrical on binding to RuvC with unstacked arms; it has a different conformation from HJ DNA in complex with RuvA. In the full resolvosome a probable DNA-RuvA(4)-RuvB(12)-RuvC(2) complex forms which resolves the HJ. Mg(2+) is required as a cofactor.

It is found in the cytoplasm. The enzyme catalyses Endonucleolytic cleavage at a junction such as a reciprocal single-stranded crossover between two homologous DNA duplexes (Holliday junction).. Its function is as follows. The RuvA-RuvB-RuvC complex processes Holliday junction (HJ) DNA during genetic recombination and DNA repair. Endonuclease that resolves HJ intermediates. Cleaves cruciform DNA by making single-stranded nicks across the HJ at symmetrical positions within the homologous arms, yielding a 5'-phosphate and a 3'-hydroxyl group; requires a central core of homology in the junction. The consensus cleavage sequence is 5'-(A/T)TT(C/G)-3'. Cleavage occurs on the 3'-side of the TT dinucleotide at the point of strand exchange. HJ branch migration catalyzed by RuvA-RuvB allows RuvC to scan DNA until it finds its consensus sequence, where it cleaves and resolves the cruciform DNA. The protein is Crossover junction endodeoxyribonuclease RuvC of Xanthomonas oryzae pv. oryzae (strain PXO99A).